A 511-amino-acid chain; its full sequence is Maturase K (511 aa).

This sequence belongs to the intron maturase 2 family. MatK subfamily.

Its subcellular location is the plastid. It localises to the chloroplast. In terms of biological role, usually encoded in the trnK tRNA gene intron. Probably assists in splicing its own and other chloroplast group II introns. This Poa pratensis (Kentucky bluegrass) protein is Maturase K.